An 886-amino-acid chain; its full sequence is Leucine--tRNA ligase (886 aa).

The short motif at Pro51–His61 is the 'HIGH' region element. Positions Lys644–Ser648 match the 'KMSKS' region motif. Lys647 is a binding site for ATP.

The protein belongs to the class-I aminoacyl-tRNA synthetase family.

The protein resides in the cytoplasm. It carries out the reaction tRNA(Leu) + L-leucine + ATP = L-leucyl-tRNA(Leu) + AMP + diphosphate. The polypeptide is Leucine--tRNA ligase (Bartonella tribocorum (strain CIP 105476 / IBS 506)).